A 199-amino-acid polypeptide reads, in one-letter code: V-type ATP synthase subunit E (199 aa).

This sequence belongs to the V-ATPase E subunit family.

In terms of biological role, produces ATP from ADP in the presence of a proton gradient across the membrane. The protein is V-type ATP synthase subunit E of Borreliella afzelii (strain PKo) (Borrelia afzelii).